A 122-amino-acid chain; its full sequence is Large ribosomal subunit protein uL14 (122 aa).

This sequence belongs to the universal ribosomal protein uL14 family. As to quaternary structure, part of the 50S ribosomal subunit. Forms a cluster with proteins L3 and L19. In the 70S ribosome, L14 and L19 interact and together make contacts with the 16S rRNA in bridges B5 and B8.

Its function is as follows. Binds to 23S rRNA. Forms part of two intersubunit bridges in the 70S ribosome. The polypeptide is Large ribosomal subunit protein uL14 (Beutenbergia cavernae (strain ATCC BAA-8 / DSM 12333 / CCUG 43141 / JCM 11478 / NBRC 16432 / NCIMB 13614 / HKI 0122)).